The following is a 422-amino-acid chain: L-threonine dehydratase biosynthetic IlvA (422 aa).

N6-(pyridoxal phosphate)lysine is present on lysine 56. Residues asparagine 83, 189-193, and serine 315 contribute to the pyridoxal 5'-phosphate site; that span reads GGGGL. The 75-residue stretch at 339 to 413 folds into the ACT-like domain; it reads HYFILNFPQR…FDPSNIYINE (75 aa).

The protein belongs to the serine/threonine dehydratase family. In terms of assembly, homotetramer. The cofactor is pyridoxal 5'-phosphate.

The enzyme catalyses L-threonine = 2-oxobutanoate + NH4(+). Its pathway is amino-acid biosynthesis; L-isoleucine biosynthesis; 2-oxobutanoate from L-threonine: step 1/1. In terms of biological role, catalyzes the anaerobic formation of alpha-ketobutyrate and ammonia from threonine in a two-step reaction. The first step involved a dehydration of threonine and a production of enamine intermediates (aminocrotonate), which tautomerizes to its imine form (iminobutyrate). Both intermediates are unstable and short-lived. The second step is the nonenzymatic hydrolysis of the enamine/imine intermediates to form 2-ketobutyrate and free ammonia. In the low water environment of the cell, the second step is accelerated by RidA. This is L-threonine dehydratase biosynthetic IlvA (ilvA) from Staphylococcus aureus (strain MSSA476).